The primary structure comprises 342 residues: Phosphate acyltransferase (342 aa).

This sequence belongs to the PlsX family. Homodimer. Probably interacts with PlsY.

It is found in the cytoplasm. The enzyme catalyses a fatty acyl-[ACP] + phosphate = an acyl phosphate + holo-[ACP]. It functions in the pathway lipid metabolism; phospholipid metabolism. Its function is as follows. Catalyzes the reversible formation of acyl-phosphate (acyl-PO(4)) from acyl-[acyl-carrier-protein] (acyl-ACP). This enzyme utilizes acyl-ACP as fatty acyl donor, but not acyl-CoA. The protein is Phosphate acyltransferase of Actinobacillus succinogenes (strain ATCC 55618 / DSM 22257 / CCUG 43843 / 130Z).